The following is a 319-amino-acid chain: Acetyl-coenzyme A carboxylase carboxyl transferase subunit alpha (319 aa).

Positions 35–296 (NIDEEVHRLR…KAQLLADLAD (262 aa)) constitute a CoA carboxyltransferase C-terminal domain.

This sequence belongs to the AccA family. In terms of assembly, acetyl-CoA carboxylase is a heterohexamer composed of biotin carboxyl carrier protein (AccB), biotin carboxylase (AccC) and two subunits each of ACCase subunit alpha (AccA) and ACCase subunit beta (AccD).

Its subcellular location is the cytoplasm. It catalyses the reaction N(6)-carboxybiotinyl-L-lysyl-[protein] + acetyl-CoA = N(6)-biotinyl-L-lysyl-[protein] + malonyl-CoA. It functions in the pathway lipid metabolism; malonyl-CoA biosynthesis; malonyl-CoA from acetyl-CoA: step 1/1. In terms of biological role, component of the acetyl coenzyme A carboxylase (ACC) complex. First, biotin carboxylase catalyzes the carboxylation of biotin on its carrier protein (BCCP) and then the CO(2) group is transferred by the carboxyltransferase to acetyl-CoA to form malonyl-CoA. This Klebsiella pneumoniae subsp. pneumoniae (strain ATCC 700721 / MGH 78578) protein is Acetyl-coenzyme A carboxylase carboxyl transferase subunit alpha.